The sequence spans 510 residues: Light-independent protochlorophyllide reductase subunit B (510 aa).

Asp36 serves as a coordination point for [4Fe-4S] cluster. The active-site Proton donor is the Asp296. Residue 431 to 432 (GM) participates in substrate binding.

It belongs to the ChlB/BchB/BchZ family. Protochlorophyllide reductase is composed of three subunits; ChlL, ChlN and ChlB. Forms a heterotetramer of two ChlB and two ChlN subunits. [4Fe-4S] cluster serves as cofactor.

The enzyme catalyses chlorophyllide a + oxidized 2[4Fe-4S]-[ferredoxin] + 2 ADP + 2 phosphate = protochlorophyllide a + reduced 2[4Fe-4S]-[ferredoxin] + 2 ATP + 2 H2O. The protein operates within porphyrin-containing compound metabolism; chlorophyll biosynthesis (light-independent). Functionally, component of the dark-operative protochlorophyllide reductase (DPOR) that uses Mg-ATP and reduced ferredoxin to reduce ring D of protochlorophyllide (Pchlide) to form chlorophyllide a (Chlide). This reaction is light-independent. The NB-protein (ChlN-ChlB) is the catalytic component of the complex. This chain is Light-independent protochlorophyllide reductase subunit B, found in Synechococcus sp. (strain JA-2-3B'a(2-13)) (Cyanobacteria bacterium Yellowstone B-Prime).